We begin with the raw amino-acid sequence, 107 residues long: MADTIQVTPQMLRSTANDIQANMEQAMGIAKGYLANQENVMNPATWSGTGVVASHMTATEITNELNKVLTGGTRLAEGLVQAAALMEGHEADSQTAFQALFGASHGS.

It belongs to the WXG100 family. CFP-10 subfamily.

It is found in the secreted. The polypeptide is ESAT-6-like protein EsxD (Mycobacterium tuberculosis (strain ATCC 25618 / H37Rv)).